The following is a 131-amino-acid chain: MVNDIIADSLTRLRNASMRRLEFTQLYYAKIVVSILEIFKEKGFIKDFNVKDKDKKQSVYVQLAYDEKGHSKISEVKRLSKPGRRVYKQKNELKRFKNGYGVIVVSTSKGVITNEEAYRQNVGGEVLCSIW.

This sequence belongs to the universal ribosomal protein uS8 family. Part of the 30S ribosomal subunit. Contacts proteins S5 and S12.

In terms of biological role, one of the primary rRNA binding proteins, it binds directly to 16S rRNA central domain where it helps coordinate assembly of the platform of the 30S subunit. In Helicobacter pylori (strain P12), this protein is Small ribosomal subunit protein uS8.